Consider the following 123-residue polypeptide: Protein Wnt-3a (123 aa).

Residue Ser-1 is the site of O-palmitoleoyl serine attachment. Cys-89 and Cys-104 are oxidised to a cystine. An N-linked (GlcNAc...) asparagine glycan is attached at Asn-90.

Belongs to the Wnt family. Post-translationally, disulfide bonds have critical and distinct roles in secretion and activity. Loss of each conserved cysteine results in high molecular weight oxidized Wnt oligomers, which are formed through inter-Wnt disulfide bonding. In terms of processing, palmitoleoylation is required for efficient binding to frizzled receptors. Depalmitoleoylation leads to Wnt signaling pathway inhibition.

It localises to the secreted. The protein resides in the extracellular space. Its subcellular location is the extracellular matrix. Ligand for members of the frizzled family of seven transmembrane receptors. Functions in the canonical Wnt signaling pathway that results in activation of transcription factors of the TCF/LEF family. Required for normal embryonic mesoderm development and formation of caudal somites. Required for normal morphogenesis of the developing neural tube. The chain is Protein Wnt-3a (WNT-3A) from Plethodon jordani (Red-cheeked salamander).